The chain runs to 208 residues: Putative dioxygenase RF_0617 (208 aa).

The protein belongs to the intradiol ring-cleavage dioxygenase family.

In Rickettsia felis (strain ATCC VR-1525 / URRWXCal2) (Rickettsia azadi), this protein is Putative dioxygenase RF_0617.